A 952-amino-acid polypeptide reads, in one-letter code: Microtubule-associated protein 6 (952 aa).

The tract at residues 1–15 (MAWPCITRACCIARF) is calmodulin-binding. Residues cysteine 5, cysteine 10, and cysteine 11 are each lipidated (S-palmitoyl cysteine). Disordered stretches follow at residues 37–457 (TEHP…RAVA) and 486–952 (IKPV…EGSP). The span at 41–55 (GAPPQPPAPPQPGLA) shows a compositional bias: pro residues. Serine 98 carries the phosphoserine modification. A compositionally biased stretch (low complexity) spans 105 to 117 (ASGSTSGSGPADS). A mn 1 region spans residues 116 to 139 (DSVMRQDYRAWKVQRPEPSCRPRS). Over residues 119–139 (MRQDYRAWKVQRPEPSCRPRS) the composition is skewed to basic and acidic residues. A calmodulin-binding region spans residues 124–138 (RAWKVQRPEPSCRPR). Tyrosine 141 carries the phosphotyrosine modification. Basic and acidic residues predominate over residues 147-171 (PFERETQYQKDFRAWPLPRRGDHPW). A mn 2 region spans residues 151–174 (ETQYQKDFRAWPLPRRGDHPWIPK). The calmodulin-binding stretch occupies residues 160 to 174 (AWPLPRRGDHPWIPK). Serine 185 is modified (phosphoserine). Residues 187-201 (PVLGMPKRRPQSQER) form a calmodulin-binding region. A Phosphoserine modification is found at serine 207. Residues 221-230 (VPAAGKASGA) show a composition bias toward low complexity. A Mc-1 repeat occupies 222 to 267 (PAAGKASGADQRDTRRKAGPAWMVTRTEGHEEKPLPPAQSQTQEGG). Residues 222–451 (PAAGKASGAD…HAQGTGPEGG (230 aa)) form a 5 X approximate tandem repeat Mc region. 8 calmodulin-binding regions span residues 235-249 (TRRK…TRTE), 280-294 (DTRR…VTRT), 325-339 (RDTR…MVTR), 373-387 (TRRK…TRTE), 421-435 (RKAG…SEGH), 481-495 (RAWT…IKAK), 532-546 (RRRI…FKES), and 559-573 (PKKT…RKAK). One copy of the Mc-2 repeat lies at 268–313 (PAAGKASGADQRDTRRKAGPAWMVTRTEGHEEKPLPPAQSQTQEGG). The stretch at 314-359 (PAAGKASGADQRDTRRKAGPAWMVTRTEGHEETPLPPAQSQTQEGG) is one Mc-3 repeat. Residues 360 to 405 (PAAGKASGADQRDTRRKAGPAWMVTRTEGHEETPLPPAQSQTQEGG) form a Mc-4 repeat. Residues 406-451 (PAAGKASGADERDTRRKAGPAWMVRRSEGHEQTTAAHAQGTGPEGG) form a Mc-5 repeat. Residues 473–496 (SSSYRNEFRAWTDIKPVKPIKAKP) are mn 3. The span at 542–551 (PFKESPKVEK) shows a compositional bias: basic and acidic residues. The span at 552 to 567 (PSVQSSKPKKTSTSQK) shows a compositional bias: low complexity. A Phosphoserine modification is found at serine 590. The segment covering 595–621 (KPDDKEQSKEMNNKLAEAKESRVKPTS) has biased composition (basic and acidic residues). The residue at position 681 (serine 681) is a Phosphoserine. Basic and acidic residues predominate over residues 711–725 (KDQDHMASELLKNKD). A Phosphoserine modification is found at serine 736. A compositionally biased stretch (pro residues) spans 761-775 (APAPTPLKDPGPVIP). 2 stretches are compositionally biased toward basic and acidic residues: residues 776 to 792 (EPEK…RKDQ) and 821 to 831 (PAKDTGTDLKG). A compositionally biased stretch (pro residues) spans 903 to 915 (VPAPTKDPGPTAP). A Phosphoserine modification is found at serine 951.

It belongs to the STOP family. Interacts with calmodulin (via C-terminus); the interaction is dependent on Ca(2+). Interacts (via C-terminus) with TMEM106B (via N-terminus). Interacts with ZDHHC13 (via ANK repeats). Interacts with ZDHHC17 (via ANK repeats). Palmitoylated. Probably depalmitoylated by ABHD17A, ABHD17B and ABHD17C. During neuronal polarization, palmitoylation and depalmitoylation cycles regulate MAP6 shuttling between secretory vesicles and microtubules, and its polarized distribution in the axon. In terms of tissue distribution, isoform 1 is specifically expressed in adult brain. Isoform 2 is predominantly expressed in embryonic brain; expression persists at low levels in the adult brain.

It is found in the cytoplasm. The protein resides in the cytoskeleton. It localises to the golgi apparatus. Its subcellular location is the cell projection. The protein localises to the axon. It is found in the dendrite. The protein resides in the cytoplasmic vesicle. It localises to the secretory vesicle membrane. Its function is as follows. Involved in microtubule stabilization in many cell types, including neuronal cells. Specifically has microtubule cold stabilizing activity. Involved in dendrite morphogenesis and maintenance by regulating lysosomal trafficking via its interaction with TMEM106B. Regulates KIF5A-mediated axonal cargo transport. Regulates axonal growth during neuron polarization. In Rattus norvegicus (Rat), this protein is Microtubule-associated protein 6 (Map6).